A 1095-amino-acid chain; its full sequence is Putative patatin-like phospholipase domain-containing protein M110.7 (1095 aa).

The chain crosses the membrane as a helical span at residues leucine 9 to isoleucine 29. The tract at residues histidine 75–valine 113 is disordered. Residues serine 80–phenylalanine 105 show a composition bias toward basic and acidic residues. A nucleoside 3',5'-cyclic phosphate contacts are provided by residues valine 144–phenylalanine 237, arginine 327–leucine 416, and isoleucine 450–alanine 509. Residues isoleucine 768 to arginine 935 form the PNPLA domain. The short motif at glycine 772 to glycine 777 is the GXGXXG element. The short motif at glycine 799–glycine 803 is the GXSXG element. Serine 801 acts as the Nucleophile in catalysis. Catalysis depends on aspartate 922, which acts as the Proton acceptor. Residues aspartate 922–alanine 924 carry the DGA/G motif.

This sequence belongs to the NTE family.

It localises to the membrane. The sequence is that of Putative patatin-like phospholipase domain-containing protein M110.7 from Caenorhabditis elegans.